The primary structure comprises 919 residues: Isoleucine--tRNA ligase (919 aa).

A 'HIGH' region motif is present at residues 57-67; that stretch reads PYANGNIHIGH. Glu-569 serves as a coordination point for L-isoleucyl-5'-AMP. A 'KMSKS' region motif is present at residues 610 to 614; that stretch reads KMSKS. Lys-613 provides a ligand contact to ATP. The Zn(2+) site is built by Cys-896, Cys-899, Cys-911, and Cys-914.

This sequence belongs to the class-I aminoacyl-tRNA synthetase family. IleS type 1 subfamily. In terms of assembly, monomer. Zn(2+) is required as a cofactor.

The protein resides in the cytoplasm. It catalyses the reaction tRNA(Ile) + L-isoleucine + ATP = L-isoleucyl-tRNA(Ile) + AMP + diphosphate. Its function is as follows. Catalyzes the attachment of isoleucine to tRNA(Ile). As IleRS can inadvertently accommodate and process structurally similar amino acids such as valine, to avoid such errors it has two additional distinct tRNA(Ile)-dependent editing activities. One activity is designated as 'pretransfer' editing and involves the hydrolysis of activated Val-AMP. The other activity is designated 'posttransfer' editing and involves deacylation of mischarged Val-tRNA(Ile). The polypeptide is Isoleucine--tRNA ligase (Aliarcobacter butzleri (strain RM4018) (Arcobacter butzleri)).